The sequence spans 240 residues: Citrate synthase-lysine N-methyltransferase CSKMT, mitochondrial (240 aa).

The N-terminal 28 residues, 1 to 28, are a transit peptide targeting the mitochondrion; the sequence is MAALRRMLHLPSLMMGTCRPFAGSLADS.

The protein belongs to the methyltransferase superfamily.

The protein resides in the mitochondrion. It carries out the reaction L-lysyl-[citrate synthase] + S-adenosyl-L-methionine = N(6)-methyl-L-lysyl-[citrate synthase] + S-adenosyl-L-homocysteine + H(+). The enzyme catalyses N(6)-methyl-L-lysyl-[citrate synthase] + S-adenosyl-L-methionine = N(6),N(6)-dimethyl-L-lysyl-[citrate synthase] + S-adenosyl-L-homocysteine + H(+). The catalysed reaction is N(6),N(6)-dimethyl-L-lysyl-[citrate synthase] + S-adenosyl-L-methionine = N(6),N(6),N(6)-trimethyl-L-lysyl-[citrate synthase] + S-adenosyl-L-homocysteine + H(+). Its activity is regulated as follows. Citrate synthase-lysine methyltransferase activity is inhibited by S-adenosylhomocysteine (AdoHcy) and oxaloacetate (OAA). Functionally, protein-lysine methyltransferase that selectively trimethylates citrate synthase (CS) in mitochondria. Seems to conduct trimethylation in a highly distributive manner rather than in a processive manner, and thus introduces a single methyl group per binding event. The polypeptide is Citrate synthase-lysine N-methyltransferase CSKMT, mitochondrial (Homo sapiens (Human)).